The following is a 396-amino-acid chain: E3 ubiquitin-protein transferase MAEA (396 aa).

Positions 1–124 (MAVQESAAQL…AAASMWKRKR (124 aa)) are extracellular and involved in cell to cell contact. At Thr28 the chain carries Phosphothreonine. Residues 121–153 (KRKRMDRMMVEHLLRCGYYNTAVKLARQSGIED) form the LisH domain. The region spanning 159–216 (MFLTAKEVEESLERRETATCLAWCHDNKSRLRKMKSCLEFSLRIQEFIELVRQNKRLD) is the CTLH domain. The segment at 314–381 (CPVCSRSLNK…QDDKVVCPRT (68 aa)) adopts an RING-Gid-type zinc-finger fold.

In terms of assembly, identified in the CTLH complex that contains GID4, RANBP9 and/or RANBP10, MKLN1, MAEA, RMND5A (or alternatively its paralog RMND5B), GID8, ARMC8, WDR26 and YPEL5. Within this complex, MAEA, RMND5A (or alternatively its paralog RMND5B), GID8, WDR26, and RANBP9 and/or RANBP10 form the catalytic core, while GID4, MKLN1, ARMC8 and YPEL5 have ancillary roles. Interacts with F-actin. Autoubiquitinated as component of the CTLH E3 ubiquitin-protein ligase complex (in vitro). As to expression, detected in embryonic fibroblasts. Detected in macrophages. Detected in heart. liver, spleen and kidney (at protein level).

It localises to the cytoplasm. Its subcellular location is the nucleus. The protein localises to the nucleoplasm. The protein resides in the nucleus matrix. It is found in the cell membrane. It localises to the cytoskeleton. The catalysed reaction is S-ubiquitinyl-[E2 ubiquitin-conjugating enzyme]-L-cysteine + [acceptor protein]-L-lysine = [E2 ubiquitin-conjugating enzyme]-L-cysteine + N(6)-ubiquitinyl-[acceptor protein]-L-lysine.. In terms of biological role, core component of the CTLH E3 ubiquitin-protein ligase complex that selectively accepts ubiquitin from UBE2H and mediates ubiquitination and subsequent proteasomal degradation of the transcription factor HBP1. MAEA and RMND5A are both required for catalytic activity of the CTLH E3 ubiquitin-protein ligase complex. MAEA is required for normal cell proliferation. The CTLH E3 ubiquitin-protein ligase complex is not required for the degradation of enzymes involved in gluconeogenesis, such as FBP1. Plays a role in erythroblast enucleation during erythrocyte maturation and in the development of mature macrophages. Mediates the attachment of erythroid cell to mature macrophages; this MAEA-mediated contact inhibits erythroid cell apoptosis. Participates in erythroblastic island formation, which is the functional unit of definitive erythropoiesis. Associates with F-actin to regulate actin distribution in erythroblasts and macrophages. May contribute to nuclear architecture and cells division events. The chain is E3 ubiquitin-protein transferase MAEA (Maea) from Mus musculus (Mouse).